We begin with the raw amino-acid sequence, 513 residues long: MEALNSILTGYAVAALSVYALWFYFLSRRLTGPKVLPFVGSLPYLIANRSRIHDWIADNLRATGGTYQTCTMVIPFVAKAQGFYTVTCHPKNVEHILKTRFDNYPKGPMWRAAFHDLLGQGIFNSDGDTWLMQRKTAALEFTTRTLRQAMARWVNGTIKNRLWLILDRAVQNNKPVDLQDLFLRLTFDNICGLTFGKDPETLSLDLPDNPFSVAFDTATEATLKRLLYTGFLWRIQKAMGIGSEDKLKKSLEVVETYMNDAIDARKNSPSDDLLSRFLKKRDVNGNVLPTDVLQRIALNFVLAGRDTSSVALSWFFWLVMNNREVETKIVNELSMVLKETRGNDQEKWTEEPLEFDEADRLVYLKAALAETLRLYPSVPQDFKYVVDDDVLPDGTFVPRGSTVTYSIYSIGRMKTIWGEDCLEFRPERWLTADGERFETPKDGYKFVAFNAGPRTCLGKDLAYNQMKSVASAVLLRYRVFPVPGHRVEQKMSLTLFMKNGLRVYLQPRGEVLA.

A helical transmembrane segment spans residues 7–27 (ILTGYAVAALSVYALWFYFLS). Cys-456 is a binding site for heme.

This sequence belongs to the cytochrome P450 family. It depends on heme as a cofactor. Expressed in roots.

The protein resides in the membrane. It carries out the reaction an omega-methyl-long-chain fatty acid + reduced [NADPH--hemoprotein reductase] + O2 = an omega-hydroxy-long-chain fatty acid + oxidized [NADPH--hemoprotein reductase] + H2O + H(+). Its function is as follows. Catalyzes the omega-hydroxylation of various fatty acids (FA). Acts on saturated and unsaturated fatty acids with chain lengths from C12 to C18 but not on hexadecane. The protein is Cytochrome P450 86A1 (CYP86A1) of Arabidopsis thaliana (Mouse-ear cress).